The primary structure comprises 509 residues: Zinc finger CCCH-type with G patch domain-containing protein (509 aa).

The disordered stretch occupies residues 41 to 61; sequence TRGSEPEATSDTKTPETSDNI. The span at 47–58 shows a compositional bias: polar residues; the sequence is EATSDTKTPETS. The C3H1-type zinc finger occupies 155–178; that stretch reads PCNYFLEGECRFDEVRCRYSHGAL. The disordered stretch occupies residues 254-278; the sequence is DDDLTSESEESNETDGSDAGNDSDM. The G-patch domain occupies 310–356; the sequence is TRGIGSKLMANMGYIHGTGLGSDGRGIVTPVSAQILPQGRSLDACME. The disordered stretch occupies residues 410 to 433; that stretch reads GSQQTENANKKTKPNNLQQHSNKT. The segment covering 423-433 has biased composition (polar residues); the sequence is PNNLQQHSNKT.

The protein resides in the nucleus. Functionally, transcription repressor. The polypeptide is Zinc finger CCCH-type with G patch domain-containing protein (Drosophila mojavensis (Fruit fly)).